The sequence spans 177 residues: MDAPIDQPVLGSRRLSNYLVALLVSIGGVGFLLTSASSYFGRDFLPIGHPAELIWVPQGLVMGAYGVGAVLLSSYLWAVIAIDVGGGRNLFDRGADTITIERRGFRRLISFTLPCGDVQAVKVEVRDGLNPRRRLALRLRGRRDVPLTRVGEPIALAELERSGAELARYLNVPLEGV.

The next 2 helical transmembrane spans lie at 20 to 40 (VALL…SSYF) and 60 to 80 (LVMG…WAVI).

This sequence belongs to the Ycf4 family.

It localises to the cellular thylakoid membrane. Functionally, seems to be required for the assembly of the photosystem I complex. The chain is Photosystem I assembly protein Ycf4 from Synechococcus sp. (strain RCC307).